The sequence spans 470 residues: MSVKVRDSLSGGLVEVGGDGRVGIYVCGPTVYNHIHIGNVRGHLFWDVAVRFLRSRGYRVKFVWNITDIDDKIINRANEEGVSWKEIVRRYTDSFHERLRLLGIGMPDVEPRATEHIPEMISLIEELIRRGHAYPAPNGDVYYAVETFPRYGALSKQRPEEMKITEKGQTGHKRNPLDFTLWKASKPGEPSWESPWGPGRPGWHIECSAMVEKHLPGGADIHGGGSDIRFPHHENELAQSCGAHPDRPFVRAWAHHGMVRMAAQKMAKSVGNVVDAREATLKHGRDAIRMWLLQSHYSQPIDYSDEILEEKRRSCERLLRLYREISRSEASSPLSDRLAGELRERFDAAMREDFNTPEAIAALFDAASGAGREISSRPSAAGEFASLKEALQELLGLLGFDVAGERVSEVDGVRIRHAGEAPGEVLERVARRERARRRREWPEADRLREELLREGWAIEDTAAGPVLSRR.

C27 contacts Zn(2+). The short motif at 29-39 (PTVYNHIHIGN) is the 'HIGH' region element. Zn(2+) is bound by residues C207, H232, and E236. The 'KMSKS' region motif lies at 265-269 (KMAKS). K268 lines the ATP pocket.

It belongs to the class-I aminoacyl-tRNA synthetase family. As to quaternary structure, monomer. Zn(2+) is required as a cofactor.

It localises to the cytoplasm. The enzyme catalyses tRNA(Cys) + L-cysteine + ATP = L-cysteinyl-tRNA(Cys) + AMP + diphosphate. The protein is Cysteine--tRNA ligase of Rubrobacter xylanophilus (strain DSM 9941 / JCM 11954 / NBRC 16129 / PRD-1).